The following is an 864-amino-acid chain: DNA mismatch repair protein MutS (864 aa).

607 to 614 (GPNMGGKS) contacts ATP.

It belongs to the DNA mismatch repair MutS family.

Its function is as follows. This protein is involved in the repair of mismatches in DNA. It is possible that it carries out the mismatch recognition step. This protein has a weak ATPase activity. This is DNA mismatch repair protein MutS from Neisseria meningitidis serogroup A / serotype 4A (strain DSM 15465 / Z2491).